The sequence spans 616 residues: Chaperone protein HscA homolog (616 aa).

It belongs to the heat shock protein 70 family.

Its function is as follows. Chaperone involved in the maturation of iron-sulfur cluster-containing proteins. Has a low intrinsic ATPase activity which is markedly stimulated by HscB. This chain is Chaperone protein HscA homolog, found in Histophilus somni (strain 2336) (Haemophilus somnus).